Reading from the N-terminus, the 1142-residue chain is MVDLESEVPPLPPRYRFRDLLLGDQGWQNDDRVQVEFYMNENTFKERLKLFFIKNQRSSLRIRLFNFSLKLLSCLLYIIRVLLEKPSQGNDWSHIFWVNRSLPLWGLQVSVALISLFETILLGYLSYKGNIWEQILRVPFILEIINAVPFIISIFWPTLRNLFVPVFLNCWLAKHALENMINDLHRAIQRTQSAMFNQVLILISTLLCLIFTCICGIQHLERIGKKLNLFDSLYFCIVTFSTVGFGDVTPETWSSKLFVVAMICVALVVLPIQFEQLAYLWMERQKSGGNYSRHRAQTEKHVVLCVSSLKIDLLMDFLNEFYAHPRLQDYYVVILCPTEMDVQVRRVLQIPMWSQRVIYLQGSALKDQDLLRAKMDNAEACFILSSRCEVDRTSSDHQTILRAWAVKDFAPNCPLYVQILKPENKFHIKFADHVVCEEEFKYAMLALNCICPATSTLITLLVHTSRGQCVCLCCREGQQSPEQWQKTYGRCSGNEVYHIVLEESTFFAEYEGKSFTYASFHAHKKFGVCLVGVRREDNKNILLNPGPRYIMNASDICFYINITKEENSAFKNQDQQRKSNVSRSFYHGPSRLPVHSIIASMGTVAIDLQDTSCRAASGPTLALPSEGGKELRRPSIAPVLEVADTSSIQTCDLLSDQSEDETTPDEETSSNLEYAKGYPPYSPYIGSSPTFCHLLQEKVPFCCLRLDKSCQHNYYEDAKAYGFKNKLIIVAAETAGNGLYNFIVPLRAYYRPKKELNPIVLLLDNPPDMHFLDAICWFPMVYYMVGSIDNLDDLLRCGVTFAANMVVVDKESTMSAEEDYMADAKTIVNVQTLFRLFSSLSIITELTHPANMRFMQFRAKDCYSLALSKLEKKERERGSNLAFMFRLPFAAGRVFSISMLDTLLYQSFVKDYMISITRLLLGLDTIPGSGFLCSMKITEDDLWIRTYARLYQKLCSSTGDVPIGIYRTESQKLTTSESQISISVEEWEDTKDVKDPGHHRSIHRNSTSSDQSDHPLLRRKSMQWARRLSRKGPKHSGKTAEKITQQRLNLYRRSERQELAELVKNRMKHLGLSTVGYDEMNDHQSTLSYILINPSPDTRLELNDVVYLIRPDPLSYLPNSEPSRKNSICNAAVQDSREETQL.

Residues 1 to 63 (MVDLESEVPP…KNQRSSLRIR (63 aa)) lie on the Cytoplasmic side of the membrane. The helical transmembrane segment at 64–84 (LFNFSLKLLSCLLYIIRVLLE) threads the bilayer. Topologically, residues 85-101 (KPSQGNDWSHIFWVNRS) are extracellular. N99 carries an N-linked (GlcNAc...) asparagine glycan. Residues 102 to 122 (LPLWGLQVSVALISLFETILL) traverse the membrane as a helical segment. The Cytoplasmic portion of the chain corresponds to 123–137 (GYLSYKGNIWEQILR). Residues 138–158 (VPFILEIINAVPFIISIFWPT) traverse the membrane as a helical segment. At 159–160 (LR) the chain is on the extracellular side. A helical membrane pass occupies residues 161 to 173 (NLFVPVFLNCWLA). Residues 174 to 198 (KHALENMINDLHRAIQRTQSAMFNQ) are Cytoplasmic-facing. A helical membrane pass occupies residues 199 to 219 (VLILISTLLCLIFTCICGIQH). Residues 220–228 (LERIGKKLN) lie on the Extracellular side of the membrane. The pore-forming intramembrane region spans 229 to 249 (LFDSLYFCIVTFSTVGFGDVT). The Extracellular portion of the chain corresponds to 250–256 (PETWSSK). Residues 257-277 (LFVVAMICVALVVLPIQFEQL) form a helical membrane-spanning segment. Topologically, residues 278–1142 (AYLWMERQKS…VQDSREETQL (865 aa)) are cytoplasmic. 2 consecutive RCK N-terminal domains span residues 299–435 (EKHV…DHVV) and 725–865 (NKLI…CYSL). Disordered regions lie at residues 989–1044 (DTKD…EKIT) and 1118–1142 (PNSEPSRKNSICNAAVQDSREETQL). A compositionally biased stretch (basic residues) spans 1017 to 1037 (LRRKSMQWARRLSRKGPKHSG). Positions 1118-1129 (PNSEPSRKNSIC) are enriched in polar residues.

It belongs to the potassium channel family. Calcium-activated (TC 1.A.1.3) subfamily. KCa4.2/KCNT2 sub-subfamily. As to quaternary structure, homotetramer. Forms heteromer with KCNT1; heteromeric channels differ from those of homomeric channels in their unitary conductance, kinetic behavior, subcellular localization, and response to activation of protein kinase C. Phosphorylated by protein kinase C. Phosphorylation of the C-terminal domain inhibits channel activity. Detected in brain, and at low levels in heart. Detected in brainstem, including auditory neurons such as the medial nucleus of the trapezoid body. Detected in the olfactory bulb, red nucleus, facial nucleus, pontine nucleus, oculomotor nucleus, substantia nigra, deep cerebellar nuclei, vestibular nucleus, and the thalamus. Detected in hippocampal CA1, CA2, and CA3 regions, the dentate gyrus, supraoptic nucleus, hypothalamus, dorsal root ganglion, and cortical layers II, III, and V. Detected in striatum cholinergic interneurons.

The protein localises to the cell membrane. The catalysed reaction is K(+)(in) = K(+)(out). Are normally in a closed state unless activated by an increase in intracellular Na(+) and Cl(-). Inhibited upon stimulation of G-protein coupled receptors, such as CHRM1 and GRM1. There is conflicting data about the effect of ATP on KNCT2 channels activity. Intracellular ATP was initially report to inhibit the channel activity. However, others studies conclude that KNCT2 channels are not inhibited by intracellular ATP. Its function is as follows. Sodium-activated and chloride-activated potassium channel. Produces rapidly activating outward rectifier K(+) currents. Contributes to regulate neuronal excitability. This is Potassium channel subfamily T member 2 (Kcnt2) from Rattus norvegicus (Rat).